Reading from the N-terminus, the 146-residue chain is VPIRKVQDDTKTLIKTIVTRINDISHTQSVSSKQRVTGLDFIPGLHPLLSLSKMDQTLAIYQQILASLPSRNVIQISNDLENLRDLLHLLAASKSCPLPQVRALESLESLGVVLEASLYSTEVVALSRLQGSLQDMLRQLDLSPGC.

Cysteine 96 and cysteine 146 are oxidised to a cystine.

Belongs to the leptin family.

It is found in the secreted. In terms of biological role, key player in the regulation of energy balance and body weight control. Once released into the circulation, has central and peripheral effects by binding LEPR, found in many tissues, which results in the activation of several major signaling pathways. In the hypothalamus, acts as an appetite-regulating factor that induces a decrease in food intake and an increase in energy consumption by inducing anorexinogenic factors and suppressing orexigenic neuropeptides, also regulates bone mass and secretion of hypothalamo-pituitary-adrenal hormones. In the periphery, increases basal metabolism, influences reproductive function, regulates pancreatic beta-cell function and insulin secretion, is pro-angiogenic for endothelial cell and affects innate and adaptive immunity. In the arcuate nucleus of the hypothalamus, activates by depolarization POMC neurons inducing FOS and SOCS3 expression to release anorexigenic peptides and inhibits by hyperpolarization NPY neurons inducing SOCS3 with a consequent reduction on release of orexigenic peptides. In addition to its known satiety inducing effect, has a modulatory role in nutrient absorption. In the intestine, reduces glucose absorption by enterocytes by activating PKC and leading to a sequential activation of p38, PI3K and ERK signaling pathways which exerts an inhibitory effect on glucose absorption. Acts as a growth factor on certain tissues, through the activation of different signaling pathways increases expression of genes involved in cell cycle regulation such as CCND1, via JAK2-STAT3 pathway, or VEGFA, via MAPK1/3 and PI3K-AKT1 pathways. May also play an apoptotic role via JAK2-STAT3 pathway and up-regulation of BIRC5 expression. Pro-angiogenic, has mitogenic activity on vascular endothelial cells and plays a role in matrix remodeling by regulating the expression of matrix metalloproteinases (MMPs) and tissue inhibitors of metalloproteinases (TIMPs). In innate immunity, modulates the activity and function of neutrophils by increasing chemotaxis and the secretion of oxygen radicals. Increases phagocytosis by macrophages and enhances secretion of pro-inflammatory mediators. Increases cytotoxic ability of NK cells. Plays a pro-inflammatory role, in synergy with IL1B, by inducing NOS2 which promotes the production of IL6, IL8 and Prostaglandin E2, through a signaling pathway that involves JAK2, PI3K, MAP2K1/MEK1 and MAPK14/p38. In adaptive immunity, promotes the switch of memory T-cells towards T helper-1 cell immune responses. Increases CD4(+)CD25(-) T-cell proliferation and reduces autophagy during TCR (T-cell receptor) stimulation, through MTOR signaling pathway activation and BCL2 up-regulation. This chain is Leptin (LEP), found in Ovis aries (Sheep).